Consider the following 452-residue polypeptide: Selenide, water dikinase 2 (452 aa).

At alanine 2 the chain carries N-acetylalanine. Residue serine 49 is modified to Phosphoserine. Selenocysteine 63 is an active-site residue. Position 63 (selenocysteine 63) is a non-standard amino acid, selenocysteine. Lysine 66 is a binding site for ATP. The interval proline 86–proline 111 is disordered. Positions glycine 95 to leucine 105 are enriched in low complexity. Residues glycine 121–aspartate 123, aspartate 141, aspartate 164, and glycine 215–threonine 218 each bind ATP. Position 123 (aspartate 123) interacts with Mg(2+). A Mg(2+)-binding site is contributed by aspartate 164. A Mg(2+)-binding site is contributed by aspartate 319.

The protein belongs to the selenophosphate synthase 1 family. Class I subfamily. In terms of assembly, homodimer. The cofactor is Mg(2+). Truncated SEPHS2 proteins produced by failed UGA/Sec decoding are ubiquitinated by the CRL2(KLHDC3) complex, which recognizes the glycine (Gly) at the C-terminus of truncated SEPHS2 proteins.

The enzyme catalyses hydrogenselenide + ATP + H2O = selenophosphate + AMP + phosphate + 2 H(+). Its function is as follows. Synthesizes selenophosphate from selenide and ATP. The protein is Selenide, water dikinase 2 (Sephs2) of Mus musculus (Mouse).